Here is a 547-residue protein sequence, read N- to C-terminus: Putative HMP/thiamine import ATP-binding protein YkoD (547 aa).

ABC transporter domains follow at residues 8–250 (LTVE…KLGI) and 295–523 (LEVS…KAKL). Residues 42–49 (GPSGCGKS) and 327–334 (GPNGTGKS) contribute to the ATP site.

This sequence belongs to the ABC transporter superfamily. The complex is composed of two ATP-binding proteins (YkoD), two transmembrane proteins (YkoC and YkoE) and a solute-binding protein (YkoF).

The protein resides in the cell membrane. Functionally, part of the ABC transporter complex YkoCDEF that could transport hydroxymethylpyrimidine (HMP) and/or thiamine. Could also transport other HMP-containing products. Responsible for energy coupling to the transport system. The polypeptide is Putative HMP/thiamine import ATP-binding protein YkoD (ykoD) (Bacillus subtilis (strain 168)).